Consider the following 427-residue polypeptide: Glutamate-1-semialdehyde 2,1-aminomutase (427 aa).

Position 268 is an N6-(pyridoxal phosphate)lysine (K268).

The protein belongs to the class-III pyridoxal-phosphate-dependent aminotransferase family. HemL subfamily. Pyridoxal 5'-phosphate is required as a cofactor.

It localises to the cytoplasm. It catalyses the reaction (S)-4-amino-5-oxopentanoate = 5-aminolevulinate. The protein operates within porphyrin-containing compound metabolism; protoporphyrin-IX biosynthesis; 5-aminolevulinate from L-glutamyl-tRNA(Glu): step 2/2. The polypeptide is Glutamate-1-semialdehyde 2,1-aminomutase (Methanococcus vannielii (strain ATCC 35089 / DSM 1224 / JCM 13029 / OCM 148 / SB)).